The sequence spans 1054 residues: Carbamoyl phosphate synthase large chain (1054 aa).

The segment at 1 to 402 is carboxyphosphate synthetic domain; the sequence is MPRRDDIRSI…SLLKAMASLE (402 aa). ATP-binding residues include R129, R169, G175, G176, R208, V210, E215, G241, V242, H243, Q285, and E299. In terms of domain architecture, ATP-grasp 1 spans 133-328; it reads REAMERIGLR…IAKIAARLAV (196 aa). Residues Q285, E299, and N301 each contribute to the Mg(2+) site. The Mn(2+) site is built by Q285, E299, and N301. The interval 403-531 is oligomerization domain; the sequence is IETRDIQARL…YYYSTYEQED (129 aa). The carbamoyl phosphate synthetic domain stretch occupies residues 532 to 914; it reads EVERGENPSV…AFAKALAAAG (383 aa). An ATP-grasp 2 domain is found at 658-849; the sequence is GRLLRELGIP…LARLATRVLL (192 aa). ATP is bound by residues R694, K733, E740, G765, V766, H767, S768, Q808, and E820. Residues Q808, E820, and N822 each contribute to the Mg(2+) site. Mn(2+)-binding residues include Q808, E820, and N822. The MGS-like domain maps to 915 to 1054; the sequence is QRLPESGRVY…SLQDLYAART (140 aa). The interval 915–1054 is allosteric domain; it reads QRLPESGRVY…SLQDLYAART (140 aa).

Belongs to the CarB family. In terms of assembly, composed of two chains; the small (or glutamine) chain promotes the hydrolysis of glutamine to ammonia, which is used by the large (or ammonia) chain to synthesize carbamoyl phosphate. Tetramer of heterodimers (alpha,beta)4. The cofactor is Mg(2+). It depends on Mn(2+) as a cofactor.

It catalyses the reaction hydrogencarbonate + L-glutamine + 2 ATP + H2O = carbamoyl phosphate + L-glutamate + 2 ADP + phosphate + 2 H(+). The enzyme catalyses hydrogencarbonate + NH4(+) + 2 ATP = carbamoyl phosphate + 2 ADP + phosphate + 2 H(+). It participates in amino-acid biosynthesis; L-arginine biosynthesis; carbamoyl phosphate from bicarbonate: step 1/1. It functions in the pathway pyrimidine metabolism; UMP biosynthesis via de novo pathway; (S)-dihydroorotate from bicarbonate: step 1/3. Large subunit of the glutamine-dependent carbamoyl phosphate synthetase (CPSase). CPSase catalyzes the formation of carbamoyl phosphate from the ammonia moiety of glutamine, carbonate, and phosphate donated by ATP, constituting the first step of 2 biosynthetic pathways, one leading to arginine and/or urea and the other to pyrimidine nucleotides. The large subunit (synthetase) binds the substrates ammonia (free or transferred from glutamine from the small subunit), hydrogencarbonate and ATP and carries out an ATP-coupled ligase reaction, activating hydrogencarbonate by forming carboxy phosphate which reacts with ammonia to form carbamoyl phosphate. This is Carbamoyl phosphate synthase large chain from Rubrobacter xylanophilus (strain DSM 9941 / JCM 11954 / NBRC 16129 / PRD-1).